The primary structure comprises 95 residues: Protein TusB (95 aa).

This sequence belongs to the DsrH/TusB family. As to quaternary structure, heterohexamer, formed by a dimer of trimers. The hexameric TusBCD complex contains 2 copies each of TusB, TusC and TusD. The TusBCD complex interacts with TusE.

It localises to the cytoplasm. Part of a sulfur-relay system required for 2-thiolation of 5-methylaminomethyl-2-thiouridine (mnm(5)s(2)U) at tRNA wobble positions. The chain is Protein TusB from Shigella flexneri.